Here is a 198-residue protein sequence, read N- to C-terminus: FMN-dependent NADH:quinone oxidoreductase (198 aa).

92-95 (MWNL) serves as a coordination point for FMN.

It belongs to the azoreductase type 1 family. Homodimer. It depends on FMN as a cofactor.

The catalysed reaction is 2 a quinone + NADH + H(+) = 2 a 1,4-benzosemiquinone + NAD(+). It carries out the reaction N,N-dimethyl-1,4-phenylenediamine + anthranilate + 2 NAD(+) = 2-(4-dimethylaminophenyl)diazenylbenzoate + 2 NADH + 2 H(+). In terms of biological role, quinone reductase that provides resistance to thiol-specific stress caused by electrophilic quinones. Functionally, also exhibits azoreductase activity. Catalyzes the reductive cleavage of the azo bond in aromatic azo compounds to the corresponding amines. This is FMN-dependent NADH:quinone oxidoreductase from Lachnoclostridium phytofermentans (strain ATCC 700394 / DSM 18823 / ISDg) (Clostridium phytofermentans).